The chain runs to 493 residues: Na(+)/H(+) antiporter subunit D (493 aa).

14 helical membrane-spanning segments follow: residues 4 to 23 (LVIL…ILFA), 30 to 52 (RVIS…VDVY), 72 to 94 (LVAD…VCLF), 107 to 126 (YYFY…AFLT), 130 to 149 (FNLF…LIVL), 162 to 184 (YVVI…YSIT), 204 to 226 (VLNV…FPLY), 233 to 255 (YFGP…GIYA), 270 to 292 (FTHT…GAVS), 299 to 321 (ILSY…YTQL), 325 to 347 (GAIY…AGAT), 368 to 390 (WLAW…SGFF), 405 to 427 (YIIA…KIFI), and 448 to 470 (LLLP…EPIF).

This sequence belongs to the CPA3 antiporters (TC 2.A.63) subunit D family. As to quaternary structure, forms a heterooligomeric complex that consists of seven subunits: MrpA, MrpB, MrpC, MrpD, MrpE, MrpF and MrpG.

Its subcellular location is the cell membrane. Its function is as follows. Mnh complex is a Na(+)Li(+)/H(+) antiporter involved in Na(+) and/or Li(+) excretion and Na(+) resistance. Na(+)/H(+) antiport consumes a transmembrane electrical potential, and is thus inferred to be electrogenic. Does not transport K(+), Ca(2+) or Mg(2+). Functionally, mrp complex is a Na(+)/H(+) antiporter involved in Na(+) excretion and Na(+) resistance. This chain is Na(+)/H(+) antiporter subunit D (mrpD), found in Alkalihalophilus pseudofirmus (strain ATCC BAA-2126 / JCM 17055 / OF4) (Bacillus pseudofirmus).